The primary structure comprises 550 residues: Hydroxylamine reductase (550 aa).

[2Fe-2S] cluster contacts are provided by C3, C6, C18, and C25. Residues H249, E273, C317, C405, C433, C458, E492, and K494 each coordinate hybrid [4Fe-2O-2S] cluster. C405 carries the cysteine persulfide modification.

Belongs to the HCP family. The cofactor is [2Fe-2S] cluster. Requires hybrid [4Fe-2O-2S] cluster as cofactor.

Its subcellular location is the cytoplasm. It carries out the reaction A + NH4(+) + H2O = hydroxylamine + AH2 + H(+). Functionally, catalyzes the reduction of hydroxylamine to form NH(3) and H(2)O. This chain is Hydroxylamine reductase, found in Salmonella typhi.